Here is a 184-residue protein sequence, read N- to C-terminus: Elongation factor P (184 aa).

Belongs to the elongation factor P family.

The protein resides in the cytoplasm. It participates in protein biosynthesis; polypeptide chain elongation. In terms of biological role, involved in peptide bond synthesis. Stimulates efficient translation and peptide-bond synthesis on native or reconstituted 70S ribosomes in vitro. Probably functions indirectly by altering the affinity of the ribosome for aminoacyl-tRNA, thus increasing their reactivity as acceptors for peptidyl transferase. The protein is Elongation factor P of Delftia acidovorans (strain DSM 14801 / SPH-1).